The primary structure comprises 41 residues: Large ribosomal subunit protein bL36 (41 aa).

This sequence belongs to the bacterial ribosomal protein bL36 family.

This is Large ribosomal subunit protein bL36 from Rhizobium rhizogenes (strain K84 / ATCC BAA-868) (Agrobacterium radiobacter).